The sequence spans 118 residues: Small ribosomal subunit protein uS13 (118 aa).

Residues proline 96–lysine 118 form a disordered region.

It belongs to the universal ribosomal protein uS13 family. Part of the 30S ribosomal subunit. Forms a loose heterodimer with protein S19. Forms two bridges to the 50S subunit in the 70S ribosome.

Located at the top of the head of the 30S subunit, it contacts several helices of the 16S rRNA. In the 70S ribosome it contacts the 23S rRNA (bridge B1a) and protein L5 of the 50S subunit (bridge B1b), connecting the 2 subunits; these bridges are implicated in subunit movement. Contacts the tRNAs in the A and P-sites. The sequence is that of Small ribosomal subunit protein uS13 from Stenotrophomonas maltophilia (strain K279a).